Here is a 373-residue protein sequence, read N- to C-terminus: tRNA-specific 2-thiouridylase MnmA (373 aa).

ATP is bound by residues 12 to 19 (GMSGGVDS) and Met38. The interaction with target base in tRNA stretch occupies residues 98-100 (NPD). The active-site Nucleophile is the Cys103. A disulfide bridge connects residues Cys103 and Cys200. Gly127 is a binding site for ATP. The interaction with tRNA stretch occupies residues 150–152 (KDQ). Cys200 acts as the Cysteine persulfide intermediate in catalysis. The interaction with tRNA stretch occupies residues 312-313 (RY).

Belongs to the MnmA/TRMU family.

It localises to the cytoplasm. The catalysed reaction is S-sulfanyl-L-cysteinyl-[protein] + uridine(34) in tRNA + AH2 + ATP = 2-thiouridine(34) in tRNA + L-cysteinyl-[protein] + A + AMP + diphosphate + H(+). Its function is as follows. Catalyzes the 2-thiolation of uridine at the wobble position (U34) of tRNA, leading to the formation of s(2)U34. The sequence is that of tRNA-specific 2-thiouridylase MnmA from Streptococcus thermophilus (strain CNRZ 1066).